Here is a 99-residue protein sequence, read N- to C-terminus: Sarcosine oxidase subunit delta (99 aa).

Residues cysteine 6, cysteine 9, histidine 59, and cysteine 63 each contribute to the Zn(2+) site.

This sequence belongs to the SoxD family. As to quaternary structure, heterotetramer composed of subunits alpha (SoxA), beta (SoxB), gamma (SoxG) and delta (SoxD).

The protein resides in the cytoplasm. The catalysed reaction is sarcosine + (6S)-5,6,7,8-tetrahydrofolate + O2 = (6R)-5,10-methylene-5,6,7,8-tetrahydrofolate + glycine + H2O2. The enzyme catalyses sarcosine + O2 + H2O = formaldehyde + glycine + H2O2. Inhibited by Zn(2+), Cu(2+), Cd(2+), Hg(2+), Ag(+), p-chloromercuribenzoate (p-CMB), iodoacetamide, N-ethylmaleimide, CN(-), o-phenanthroline and sodium lauryl sulfate. Functionally, in the presence of tetrahydrofolate, catalyzes the oxidative demethylation of sarcosine to yield glycine, 5,10-methylenetetrahydrofolate and hydrogen peroxide. In the absence of tetrahydrofolate, catalyzes the oxidative demethylation of sarcosine to yield glycine, formaldehyde and hydrogen peroxide. Can also use N-methyl-L-alanine and N-ethyl-L-glycine. Is very specific for oxygen as an acceptor. The polypeptide is Sarcosine oxidase subunit delta (Corynebacterium sp. (strain U-96)).